We begin with the raw amino-acid sequence, 306 residues long: MLPYIVLVLGCWSVLSQAAQTDDEERAGNRRPIWIMGHMVNAIGQIDEFVNLGANSIETDVSFDDNANPEYTYHGIPCDCGRNCKKYENFNDFLKGLRSATTPGNSKYQEKLVLVVFDLKTGSLYDNQANDAGKKLAKNLLQHYWNNGNNGGRAYIVLSIPDLNHYPLIKGFKDQLTKDGHPELMEKVGHDFSGNDDIGDVGKAYKKAGITGHIWQSDGITNCLPRGLSRVNAAVANRDSANGFINKVYYWTVDKRSTTRDALDAGVDGIMTNYPDVITDVLNEAAYKKKFRVATYDDNPWVTFKK.

The signal sequence occupies residues 1-18 (MLPYIVLVLGCWSVLSQA). The propeptide occupies 19–26 (AQTDDEER). H38 is a catalytic residue. Mg(2+) contacts are provided by E58 and D60. The active-site Nucleophile is H74. Cystine bridges form between C78–C84 and C80–C223. D118 contacts Mg(2+).

The protein belongs to the arthropod phospholipase D family. Class II subfamily. Class IIa sub-subfamily. Mg(2+) serves as cofactor. In terms of tissue distribution, expressed by the venom gland.

It localises to the secreted. It carries out the reaction an N-(acyl)-sphingosylphosphocholine = an N-(acyl)-sphingosyl-1,3-cyclic phosphate + choline. The catalysed reaction is an N-(acyl)-sphingosylphosphoethanolamine = an N-(acyl)-sphingosyl-1,3-cyclic phosphate + ethanolamine. It catalyses the reaction a 1-acyl-sn-glycero-3-phosphocholine = a 1-acyl-sn-glycero-2,3-cyclic phosphate + choline. The enzyme catalyses a 1-acyl-sn-glycero-3-phosphoethanolamine = a 1-acyl-sn-glycero-2,3-cyclic phosphate + ethanolamine. Dermonecrotic toxins cleave the phosphodiester linkage between the phosphate and headgroup of certain phospholipids (sphingolipid and lysolipid substrates), forming an alcohol (often choline) and a cyclic phosphate. This toxin acts on sphingomyelin (SM). The level of enzymatic activity is high according to Tambourgi and colleagues or low according to Felicori and colleagues. It may also act on ceramide phosphoethanolamine (CPE), lysophosphatidylcholine (LPC) and lysophosphatidylethanolamine (LPE), but not on lysophosphatidylserine (LPS), and lysophosphatidylglycerol (LPG). It acts by transphosphatidylation, releasing exclusively cyclic phosphate products as second products. It induces complement-dependent hemolysis, dermonecrosis, vascular permeability and platelet aggregation. Both C5a and the membrane attack complex may play a role in the induction of dermonecrosis. MMP-9 and MMP-2 produced by skin fibroblasts can also contribute to proteolytic tissue destruction. The sequence is that of Dermonecrotic toxin LiSicTox-alphaIA1bi from Loxosceles intermedia (Brown spider).